Consider the following 217-residue polypeptide: N-(5'-phosphoribosyl)anthranilate isomerase (217 aa).

The protein belongs to the TrpF family.

It carries out the reaction N-(5-phospho-beta-D-ribosyl)anthranilate = 1-(2-carboxyphenylamino)-1-deoxy-D-ribulose 5-phosphate. Its pathway is amino-acid biosynthesis; L-tryptophan biosynthesis; L-tryptophan from chorismate: step 3/5. The polypeptide is N-(5'-phosphoribosyl)anthranilate isomerase (Acaryochloris marina (strain MBIC 11017)).